The sequence spans 399 residues: 3-methyl-2-oxobutanoate hydroxymethyltransferase 2, mitochondrial (399 aa).

The N-terminal 90 residues, M1–R90, are a transit peptide targeting the mitochondrion. Mg(2+)-binding residues include D125 and D164. 3-methyl-2-oxobutanoate is bound by residues D125–S126, D164, and K194. Position 196 (E196) interacts with Mg(2+). Residue E264 is the Proton acceptor of the active site.

It belongs to the PanB family. The cofactor is Mg(2+).

The protein resides in the mitochondrion. It catalyses the reaction 3-methyl-2-oxobutanoate + (6R)-5,10-methylene-5,6,7,8-tetrahydrofolate + H2O = 2-dehydropantoate + (6S)-5,6,7,8-tetrahydrofolate. Its pathway is cofactor biosynthesis; (R)-pantothenate biosynthesis; (R)-pantoate from 3-methyl-2-oxobutanoate: step 1/2. Its function is as follows. Catalyzes the reversible reaction in which hydroxymethyl group from 5,10-methylenetetrahydrofolate is transferred onto alpha-ketoisovalerate to form ketopantoate. The chain is 3-methyl-2-oxobutanoate hydroxymethyltransferase 2, mitochondrial (KPHMT2) from Oryza sativa subsp. japonica (Rice).